We begin with the raw amino-acid sequence, 131 residues long: Small ribosomal subunit protein uS11 (131 aa).

The protein belongs to the universal ribosomal protein uS11 family. Part of the 30S ribosomal subunit. Interacts with proteins S7 and S18. Binds to IF-3.

Located on the platform of the 30S subunit, it bridges several disparate RNA helices of the 16S rRNA. Forms part of the Shine-Dalgarno cleft in the 70S ribosome. The chain is Small ribosomal subunit protein uS11 from Bacillus pumilus (strain SAFR-032).